The sequence spans 1179 residues: Protein turtle homolog A (1179 aa).

The first 20 residues, 1-20 (MVWCLGLAVLSLVISQGADG), serve as a signal peptide directing secretion. Residues 21-734 (RGKPEVVSVV…TQLPGLLPQP (714 aa)) lie on the Extracellular side of the membrane. 5 Ig-like domains span residues 24-124 (PEVV…DFAN), 136-216 (PQFQ…GSAT), 226-318 (PPVI…AYLT), 322-410 (PAQV…SPVT), and 418-502 (PAFI…TNVY). 5 disulfide bridges follow: cysteine 41/cysteine 108, cysteine 158/cysteine 206, cysteine 248/cysteine 301, cysteine 344/cysteine 395, and cysteine 440/cysteine 486. N-linked (GlcNAc...) asparagine glycans are attached at residues asparagine 188 and asparagine 256. 2 Fibronectin type-III domains span residues 507 to 611 (SPHV…TTPA) and 623 to 718 (PLSP…TSGL). Residues asparagine 513 and asparagine 524 are each glycosylated (N-linked (GlcNAc...) asparagine). The interval 606–626 (LPTTPAAPGLPPTEIPPPLSP) is disordered. Residues 613–626 (PGLPPTEIPPPLSP) are compositionally biased toward pro residues. Residues 735 to 755 (VLAGVVGGVCFLGVAVLVSIL) traverse the membrane as a helical segment. Over 756–1179 (AGCLLNRRRA…VPHPEQATLL (424 aa)) the chain is Cytoplasmic. 3 disordered regions span residues 767 to 919 (RRRR…PLPG), 940 to 988 (DWPP…VVGA), and 1015 to 1079 (AAPR…KRRN). Residues 785–800 (GKSAAPSALGSGSPDS) show a composition bias toward low complexity. Serine 809 is subject to Phosphoserine. Pro residues-rich tracts occupy residues 826–836 (TPSPHPDPPSS) and 906–919 (VAPPPAAPPSPLPG). At threonine 972 the chain carries Phosphothreonine. A PDZ-binding motif is present at residues 1177–1179 (TLL).

This sequence belongs to the immunoglobulin superfamily. Turtle family. As to quaternary structure, interacts with MAGI2 and SHANK1.

The protein localises to the cell membrane. Its subcellular location is the synapse. Functions in dendrite outgrowth and synapse maturation. The protein is Protein turtle homolog A (IGSF9) of Homo sapiens (Human).